Here is an 88-residue protein sequence, read N- to C-terminus: UPF0367 protein AM1_1885 (88 aa).

Belongs to the UPF0367 family.

The chain is UPF0367 protein AM1_1885 from Acaryochloris marina (strain MBIC 11017).